The sequence spans 699 residues: MVRFFGLNKKKNEEKENTDLPADNEQNAAETSSSNVSGNEERIDPNSHDTNPENANNDDASTTFGSSIQSSSIFSRGRMTYGTGASSSMATSEMRSHSSGHSGSKNSKNLQGFKDVGKPLRAVSFLSPVKEEESQDTQNTLDVSSSTSSTLATSENARENSFTSRRSITLEYIHKSLSELEENLVDIMDDIHQDVISISKAVIEAIEYFKEFLPTTRDRIPYRISLEKSSSLRKINKIVLHFLDNLLVSDAFSNSRSILLRRFYFFLKKLNLITDDDLISESGVLPCLSVFCIGSHCNLPSMDKLGMILDELTKMDSSIISDQEGAFIAPILRGITPKSSILTIMFGLPNLQHEHYEMIKVLYSLFPDVHMYCVKDYIKKAASAVGSIPSHTAATIDTIAPTKFQFSPPYAVSENPLELPISMSLSTETSAKITGTLGGYLFPQTGSDKKFSQFASCSFAITCAHVVLSEKQDYPNVMVPSNVLQTSYKKVLTKESDRYPDGSVEKTAFLEEVQRIDQNLNWQKSNKFGQVVWGERAIVDHRLSDFAIIKVNSSFKCQNTLGNGLKSFPDPTLRFQNLHVKRKIFKMKPGMKVFKIGASTGYTSGELNSTKLVYWADGKLQSSEFVVASPTPLFASAGDSGAWILTKLEDRLGLGLVGMLHSYDGEQRQFGLFTPIGDILERLHAVTKIQWDIDPQLDG.

2 disordered regions span residues 1–113 (MVRF…LQGF) and 128–158 (PVKEEESQDTQNTLDVSSSTSSTLATSENAR). Residues 1–381 (MVRFFGLNKK…YCVKDYIKKA (381 aa)) constitute a propeptide that is removed on maturation. Residues 24–38 (NEQNAAETSSSNVSG) are compositionally biased toward polar residues. Positions 39–51 (NEERIDPNSHDTN) are enriched in basic and acidic residues. A compositionally biased stretch (low complexity) spans 61–78 (STTFGSSIQSSSIFSRGR). Residues 83–93 (TGASSSMATSE) show a composition bias toward polar residues. Low complexity-rich tracts occupy residues 97–109 (HSSGHSGSKNSKN) and 144–154 (SSSTSSTLATS). Residues 459–699 (FAITCAHVVL…QWDIDPQLDG (241 aa)) are serine protease. Catalysis depends on charge relay system residues histidine 465, aspartate 545, and serine 640.

The protein belongs to the peptidase S64 family. As to quaternary structure, component of the plasma membrane SPS (SSY1-PTR3-SSY5) amino acid sensor complex. Post-translationally, the propeptide is autoproteolytically cleaved from the catalytic domain but remains associated, forming an inactive protease complex. This processing occurs even in the absence of signaling.

It is found in the cell membrane. Protease component of the SPS-sensor system, which regulates the expression of several amino acid-metabolizing enzymes and amino acid- and peptide-permeases in response to extracellular amino acid levels by controlling the activity of two transcription factors, STP1 and STP2. Catalyzes the activation of these transcription factors, which are synthesized as latent cytoplasmic precursors, by proteolytic removal of an N-terminal inhibitory domain containing cytoplasmic retention motifs. SSY5 binds as an inactive protease complex to STP1. In response to extracellular amino acids and dependent on the other SPS-sensor components, the inhibitory propeptide is induced to dissociate, and thereby enables the catalytic domain to process STP1. The polypeptide is SPS-sensor serine protease component SSY5 (SSY5) (Saccharomyces cerevisiae (strain ATCC 204508 / S288c) (Baker's yeast)).